The following is a 318-amino-acid chain: Ferrochelatase (318 aa).

The Fe cation site is built by His-186 and Glu-264.

This sequence belongs to the ferrochelatase family.

The protein localises to the cytoplasm. It carries out the reaction heme b + 2 H(+) = protoporphyrin IX + Fe(2+). The protein operates within porphyrin-containing compound metabolism; protoheme biosynthesis; protoheme from protoporphyrin-IX: step 1/1. Functionally, catalyzes the ferrous insertion into protoporphyrin IX. This is Ferrochelatase from Chlamydia abortus (strain DSM 27085 / S26/3) (Chlamydophila abortus).